An 85-amino-acid chain; its full sequence is Augerpeptide-s6a (85 aa).

Positions Met1–Leu20 are cleaved as a signal peptide. The propeptide occupies Gln21–Arg43. 3 cysteine pairs are disulfide-bonded: Cys54–Cys65, Cys58–Cys70, and Cys64–Cys81.

As to expression, expressed by the venom duct.

It is found in the secreted. In Terebra subulata (Chocolate spotted auger), this protein is Augerpeptide-s6a.